Here is a 467-residue protein sequence, read N- to C-terminus: Light-independent protochlorophyllide reductase subunit N (467 aa).

C24, C49, and C109 together coordinate [4Fe-4S] cluster.

The protein belongs to the BchN/ChlN family. In terms of assembly, protochlorophyllide reductase is composed of three subunits; ChlL, ChlN and ChlB. Forms a heterotetramer of two ChlB and two ChlN subunits. [4Fe-4S] cluster serves as cofactor.

It carries out the reaction chlorophyllide a + oxidized 2[4Fe-4S]-[ferredoxin] + 2 ADP + 2 phosphate = protochlorophyllide a + reduced 2[4Fe-4S]-[ferredoxin] + 2 ATP + 2 H2O. Its pathway is porphyrin-containing compound metabolism; chlorophyll biosynthesis (light-independent). In terms of biological role, component of the dark-operative protochlorophyllide reductase (DPOR) that uses Mg-ATP and reduced ferredoxin to reduce ring D of protochlorophyllide (Pchlide) to form chlorophyllide a (Chlide). This reaction is light-independent. The NB-protein (ChlN-ChlB) is the catalytic component of the complex. This is Light-independent protochlorophyllide reductase subunit N from Leptolyngbya boryana (Plectonema boryanum).